The following is a 203-amino-acid chain: ATP phosphoribosyltransferase (203 aa).

It belongs to the ATP phosphoribosyltransferase family. Short subfamily.

Its subcellular location is the cytoplasm. It catalyses the reaction 1-(5-phospho-beta-D-ribosyl)-ATP + diphosphate = 5-phospho-alpha-D-ribose 1-diphosphate + ATP. It functions in the pathway amino-acid biosynthesis; L-histidine biosynthesis; L-histidine from 5-phospho-alpha-D-ribose 1-diphosphate: step 1/9. Functionally, catalyzes the condensation of ATP and 5-phosphoribose 1-diphosphate to form N'-(5'-phosphoribosyl)-ATP (PR-ATP). Has a crucial role in the pathway because the rate of histidine biosynthesis seems to be controlled primarily by regulation of HisG enzymatic activity. This is ATP phosphoribosyltransferase from Thermococcus kodakarensis (strain ATCC BAA-918 / JCM 12380 / KOD1) (Pyrococcus kodakaraensis (strain KOD1)).